The primary structure comprises 367 residues: NADH-quinone oxidoreductase subunit D (367 aa).

Belongs to the complex I 49 kDa subunit family. In terms of assembly, NDH-1 is composed of 14 different subunits. Subunits NuoB, C, D, E, F, and G constitute the peripheral sector of the complex.

It localises to the cell membrane. The enzyme catalyses a quinone + NADH + 5 H(+)(in) = a quinol + NAD(+) + 4 H(+)(out). In terms of biological role, NDH-1 shuttles electrons from NADH, via FMN and iron-sulfur (Fe-S) centers, to quinones in the respiratory chain. The immediate electron acceptor for the enzyme in this species is believed to be ubiquinone. Couples the redox reaction to proton translocation (for every two electrons transferred, four hydrogen ions are translocated across the cytoplasmic membrane), and thus conserves the redox energy in a proton gradient. This Dehalococcoides mccartyi (strain ATCC BAA-2100 / JCM 16839 / KCTC 5957 / BAV1) protein is NADH-quinone oxidoreductase subunit D.